Consider the following 393-residue polypeptide: Demethylspheroidene O-methyltransferase (393 aa).

The disordered stretch occupies residues 1–36 (MPKDDHTGATADRTAQPTGTGKQPLVPGQPGAAPVQ). The segment covering 26 to 36 (VPGQPGAAPVQ) has biased composition (low complexity). The S-adenosyl-L-methionine site is built by D259 and R297.

Belongs to the class I-like SAM-binding methyltransferase superfamily. Cation-independent O-methyltransferase family.

It catalyses the reaction demethylspheroidene + S-adenosyl-L-methionine = spheroidene + S-adenosyl-L-homocysteine + H(+). It functions in the pathway carotenoid biosynthesis; spheroidene biosynthesis. Methyltransferase that mediates the O-methylation of 1-hydroxy carotenoids. Converts hydroxyneurosporene to methoxyneurosporene or demethylspheroidene to spheroidene. Also able to produce spirilloxanthin. The polypeptide is Demethylspheroidene O-methyltransferase (crtF) (Rhodobacter capsulatus (strain ATCC BAA-309 / NBRC 16581 / SB1003)).